A 156-amino-acid chain; its full sequence is 6,7-dimethyl-8-ribityllumazine synthase (156 aa).

Residues F23, 57 to 59 (AFE), and 81 to 83 (AVI) contribute to the 5-amino-6-(D-ribitylamino)uracil site. Residue 86 to 87 (AT) participates in (2S)-2-hydroxy-3-oxobutyl phosphate binding. The active-site Proton donor is H89. F114 serves as a coordination point for 5-amino-6-(D-ribitylamino)uracil. R128 contributes to the (2S)-2-hydroxy-3-oxobutyl phosphate binding site.

This sequence belongs to the DMRL synthase family.

It catalyses the reaction (2S)-2-hydroxy-3-oxobutyl phosphate + 5-amino-6-(D-ribitylamino)uracil = 6,7-dimethyl-8-(1-D-ribityl)lumazine + phosphate + 2 H2O + H(+). The protein operates within cofactor biosynthesis; riboflavin biosynthesis; riboflavin from 2-hydroxy-3-oxobutyl phosphate and 5-amino-6-(D-ribitylamino)uracil: step 1/2. Catalyzes the formation of 6,7-dimethyl-8-ribityllumazine by condensation of 5-amino-6-(D-ribitylamino)uracil with 3,4-dihydroxy-2-butanone 4-phosphate. This is the penultimate step in the biosynthesis of riboflavin. This Campylobacter concisus (strain 13826) protein is 6,7-dimethyl-8-ribityllumazine synthase.